We begin with the raw amino-acid sequence, 461 residues long: UDP-N-acetylmuramoylalanine--D-glutamate ligase (461 aa).

G117–T123 is a binding site for ATP.

Belongs to the MurCDEF family.

It localises to the cytoplasm. It carries out the reaction UDP-N-acetyl-alpha-D-muramoyl-L-alanine + D-glutamate + ATP = UDP-N-acetyl-alpha-D-muramoyl-L-alanyl-D-glutamate + ADP + phosphate + H(+). It participates in cell wall biogenesis; peptidoglycan biosynthesis. Its function is as follows. Cell wall formation. Catalyzes the addition of glutamate to the nucleotide precursor UDP-N-acetylmuramoyl-L-alanine (UMA). This Synechococcus sp. (strain CC9605) protein is UDP-N-acetylmuramoylalanine--D-glutamate ligase.